Consider the following 358-residue polypeptide: Nuclease EXOG, mitochondrial (358 aa).

Catalysis depends on histidine 132, which acts as the Proton acceptor. An a divalent metal cation-binding site is contributed by asparagine 163.

Belongs to the DNA/RNA non-specific endonuclease family. Homodimer. A divalent metal cation serves as cofactor.

It localises to the mitochondrion inner membrane. Endo/exonuclease with nicking activity towards supercoiled DNA, a preference for single-stranded DNA and 5'-3' exonuclease activity. In Xenopus laevis (African clawed frog), this protein is Nuclease EXOG, mitochondrial (exog).